The primary structure comprises 798 residues: Probable serine/threonine-protein kinase DDB_G0276461 (798 aa).

The region spanning 54 to 324 (VTEVKLVAEG…DLLNYLNEIR (271 aa)) is the Protein kinase domain. ATP contacts are provided by residues 60–68 (VAEGGFGFV) and Lys-82. Residue Asp-185 is the Proton acceptor of the active site. Disordered stretches follow at residues 330–538 (GLQT…NGNF), 553–645 (TNGS…SYNN), and 659–798 (SSAS…FGIL). Composition is skewed to low complexity over residues 335-406 (SSNN…NTPN), 429-490 (SNSN…NNNN), 506-538 (PSPSNSNSNVIINNTNSSGKNNQNKSNSGNGNF), 557-603 (TNFE…INNS), 611-642 (SSGSLPQSRQSSFNSTPQQQQQQFNSSTNSGS), and 659-678 (SSASISSSGGVSNNSDNSWN). The segment covering 679-697 (VTLTPSQSNKNSTGNLKPL) has biased composition (polar residues). The segment covering 698 to 716 (NNNNNNNNNNNNRFANNTN) has biased composition (low complexity). Residues 717-769 (SSRDYSFDFSSPNTSNNNDFGSFVQPSSSSSLNTTHFSKPNYNVNLNQTTSMT) show a composition bias toward polar residues. Positions 770 to 790 (NNYNNNNYNNNNNSNNNNNNS) are enriched in low complexity.

Belongs to the protein kinase superfamily. Ser/Thr protein kinase family.

It carries out the reaction L-seryl-[protein] + ATP = O-phospho-L-seryl-[protein] + ADP + H(+). It catalyses the reaction L-threonyl-[protein] + ATP = O-phospho-L-threonyl-[protein] + ADP + H(+). This Dictyostelium discoideum (Social amoeba) protein is Probable serine/threonine-protein kinase DDB_G0276461.